Here is a 148-residue protein sequence, read N- to C-terminus: 3-hydroxyacyl-[acyl-carrier-protein] dehydratase FabZ (148 aa).

Histidine 49 is an active-site residue.

This sequence belongs to the thioester dehydratase family. FabZ subfamily.

The protein localises to the cytoplasm. It catalyses the reaction a (3R)-hydroxyacyl-[ACP] = a (2E)-enoyl-[ACP] + H2O. Functionally, involved in unsaturated fatty acids biosynthesis. Catalyzes the dehydration of short chain beta-hydroxyacyl-ACPs and long chain saturated and unsaturated beta-hydroxyacyl-ACPs. The protein is 3-hydroxyacyl-[acyl-carrier-protein] dehydratase FabZ of Ehrlichia canis (strain Jake).